The sequence spans 214 residues: Glycerol-3-phosphate acyltransferase (214 aa).

The next 5 helical transmembrane spans lie at 4-24, 52-72, 82-102, 118-138, and 159-179; these read LIVA…IVSA, AAIL…WFVV, DTSV…PAFF, LAIN…VAFF, and FLFG…LLVW.

It belongs to the PlsY family. As to quaternary structure, probably interacts with PlsX.

It localises to the cell inner membrane. The catalysed reaction is an acyl phosphate + sn-glycerol 3-phosphate = a 1-acyl-sn-glycero-3-phosphate + phosphate. It participates in lipid metabolism; phospholipid metabolism. Functionally, catalyzes the transfer of an acyl group from acyl-phosphate (acyl-PO(4)) to glycerol-3-phosphate (G3P) to form lysophosphatidic acid (LPA). This enzyme utilizes acyl-phosphate as fatty acyl donor, but not acyl-CoA or acyl-ACP. This chain is Glycerol-3-phosphate acyltransferase, found in Paraburkholderia xenovorans (strain LB400).